A 146-amino-acid chain; its full sequence is Hemoglobin subunit beta (146 aa).

The Globin domain occupies 2-146 (QWSAEEKQLI…VAHALARKYH (145 aa)). 2 residues coordinate heme b: H63 and H92.

The protein belongs to the globin family. Heterotetramer of two alpha chains and two beta chains. Red blood cells.

Functionally, involved in oxygen transport from the lung to the various peripheral tissues. This Struthio camelus (Common ostrich) protein is Hemoglobin subunit beta (HBB).